The chain runs to 499 residues: ATP synthase subunit alpha (499 aa).

169 to 176 (GDRGTGKT) is an ATP binding site.

The protein belongs to the ATPase alpha/beta chains family. In terms of assembly, F-type ATPases have 2 components, CF(1) - the catalytic core - and CF(0) - the membrane proton channel. CF(1) has five subunits: alpha(3), beta(3), gamma(1), delta(1), epsilon(1). CF(0) has three main subunits: a(1), b(2) and c(9-12). The alpha and beta chains form an alternating ring which encloses part of the gamma chain. CF(1) is attached to CF(0) by a central stalk formed by the gamma and epsilon chains, while a peripheral stalk is formed by the delta and b chains.

It is found in the cell inner membrane. The enzyme catalyses ATP + H2O + 4 H(+)(in) = ADP + phosphate + 5 H(+)(out). In terms of biological role, produces ATP from ADP in the presence of a proton gradient across the membrane. The alpha chain is a regulatory subunit. This Brachyspira hyodysenteriae (strain ATCC 49526 / WA1) protein is ATP synthase subunit alpha.